A 200-amino-acid polypeptide reads, in one-letter code: Holliday junction branch migration complex subunit RuvA (200 aa).

The interval methionine 1 to isoleucine 64 is domain I. Residues threonine 65–glutamate 143 are domain II. A flexible linker region spans residues threonine 144 to serine 148. The domain III stretch occupies residues aspartate 149 to serine 200.

This sequence belongs to the RuvA family. As to quaternary structure, homotetramer. Forms an RuvA(8)-RuvB(12)-Holliday junction (HJ) complex. HJ DNA is sandwiched between 2 RuvA tetramers; dsDNA enters through RuvA and exits via RuvB. An RuvB hexamer assembles on each DNA strand where it exits the tetramer. Each RuvB hexamer is contacted by two RuvA subunits (via domain III) on 2 adjacent RuvB subunits; this complex drives branch migration. In the full resolvosome a probable DNA-RuvA(4)-RuvB(12)-RuvC(2) complex forms which resolves the HJ.

The protein resides in the cytoplasm. In terms of biological role, the RuvA-RuvB-RuvC complex processes Holliday junction (HJ) DNA during genetic recombination and DNA repair, while the RuvA-RuvB complex plays an important role in the rescue of blocked DNA replication forks via replication fork reversal (RFR). RuvA specifically binds to HJ cruciform DNA, conferring on it an open structure. The RuvB hexamer acts as an ATP-dependent pump, pulling dsDNA into and through the RuvAB complex. HJ branch migration allows RuvC to scan DNA until it finds its consensus sequence, where it cleaves and resolves the cruciform DNA. The chain is Holliday junction branch migration complex subunit RuvA from Chloroherpeton thalassium (strain ATCC 35110 / GB-78).